Reading from the N-terminus, the 1372-residue chain is uncharacterized protein (1372 aa).

Residues 1–67 (MEATDQEVML…PPAPSKNPMQ (67 aa)) form a disordered region. The segment covering 17–28 (MSTSATSSTNGG) has biased composition (polar residues). The stretch at 75-143 (NLYQTAQEQL…LEEHDRLRRK (69 aa)) forms a coiled coil. 5 disordered regions span residues 178-199 (NDLS…LSGD), 238-287 (HINR…QASS), 380-414 (EVSN…EVRR), 427-447 (QSLE…VPVP), and 486-531 (EERM…DSGI). Low complexity-rich tracts occupy residues 184–198 (GIGT…SLSG) and 238–251 (HINR…HGNG). 2 stretches are compositionally biased toward polar residues: residues 257-287 (TGPS…QASS) and 399-408 (TNGNSATTAP). Residues 409–438 (KSEVRRLSGDISSIRDRMQSLEQQRKAFSS) are a coiled coil. Over residues 486 to 499 (EERMRQQQQKEKHS) the composition is skewed to basic and acidic residues. Residues 514-523 (ALIIEEPPVA) show a composition bias toward low complexity. Residues 539 to 580 (LQQQQQLNAAIAALALEERQLEEAANAVNQIEAEFDELTDLH) are a coiled coil. Low complexity predominate over residues 652–673 (VSKSGPTPNPTSTPNMVSSSPN). 5 disordered regions span residues 652–679 (VSKS…LRRK), 799–820 (SRQL…RSEH), 860–897 (SQSD…PKRV), 1151–1181 (SSQM…PIPK), and 1231–1250 (SPPS…SPTK). 2 stretches are compositionally biased toward polar residues: residues 860-871 (SQSDSKSLTSPI) and 1151-1160 (SSQMMKTSLP).

This is an uncharacterized protein from Drosophila melanogaster (Fruit fly).